Here is a 441-residue protein sequence, read N- to C-terminus: 3-phosphoshikimate 1-carboxyvinyltransferase (441 aa).

The disordered stretch occupies residues 1 to 24; sequence MSGTGQSDDPRELKAGGSLQGRVK. 3-phosphoshikimate is bound by residues Lys29, Ser30, and Arg34. Residue Lys29 coordinates phosphoenolpyruvate. 2 residues coordinate phosphoenolpyruvate: Gly103 and Arg132. 3-phosphoshikimate is bound by residues Ser177, Gln179, Asp328, and Lys355. Gln179 contributes to the phosphoenolpyruvate binding site. Asp328 acts as the Proton acceptor in catalysis. 2 residues coordinate phosphoenolpyruvate: Arg359 and Arg401.

Belongs to the EPSP synthase family. In terms of assembly, monomer.

The protein localises to the cytoplasm. The catalysed reaction is 3-phosphoshikimate + phosphoenolpyruvate = 5-O-(1-carboxyvinyl)-3-phosphoshikimate + phosphate. The protein operates within metabolic intermediate biosynthesis; chorismate biosynthesis; chorismate from D-erythrose 4-phosphate and phosphoenolpyruvate: step 6/7. In terms of biological role, catalyzes the transfer of the enolpyruvyl moiety of phosphoenolpyruvate (PEP) to the 5-hydroxyl of shikimate-3-phosphate (S3P) to produce enolpyruvyl shikimate-3-phosphate and inorganic phosphate. This chain is 3-phosphoshikimate 1-carboxyvinyltransferase, found in Synechococcus sp. (strain CC9605).